The chain runs to 254 residues: UPF0246 protein FTH_1656 (254 aa).

It belongs to the UPF0246 family.

In Francisella tularensis subsp. holarctica (strain OSU18), this protein is UPF0246 protein FTH_1656.